We begin with the raw amino-acid sequence, 339 residues long: Methylthioribose-1-phosphate isomerase (339 aa).

Substrate-binding positions include 50-52, R84, and Q186; that span reads RGA. D227 acts as the Proton donor in catalysis. Residue 237 to 238 coordinates substrate; the sequence is NK.

This sequence belongs to the eIF-2B alpha/beta/delta subunits family. MtnA subfamily.

The catalysed reaction is 5-(methylsulfanyl)-alpha-D-ribose 1-phosphate = 5-(methylsulfanyl)-D-ribulose 1-phosphate. The protein operates within amino-acid biosynthesis; L-methionine biosynthesis via salvage pathway; L-methionine from S-methyl-5-thio-alpha-D-ribose 1-phosphate: step 1/6. Functionally, catalyzes the interconversion of methylthioribose-1-phosphate (MTR-1-P) into methylthioribulose-1-phosphate (MTRu-1-P). The sequence is that of Methylthioribose-1-phosphate isomerase from Sulfurihydrogenibium sp. (strain YO3AOP1).